We begin with the raw amino-acid sequence, 367 residues long: Prenyltransferase idtC (367 aa).

Positions 1-22 are cleaved as a signal peptide; that stretch reads MTTLAWFAGRSMVLDLAALTSA. The segment covering 32–42 has biased composition (low complexity); it reads TSTPTSTPTST. Residues 32–84 are disordered; that stretch reads TSTPTSTPTSTDKAGTPPGSTIHHYGYPQGSVTKPNNSKTEKENGSPKDSKGN. An N-linked (GlcNAc...) asparagine glycan is attached at Asn-67. The segment covering 70 to 82 has biased composition (basic and acidic residues); the sequence is KTEKENGSPKDSK. His-132 contacts substrate. Asp-139 and Asp-143 together coordinate Mg(2+). Arg-148 is a substrate binding site. Asn-150 carries N-linked (GlcNAc...) asparagine glycosylation. The substrate site is built by Lys-233, Thr-234, Gln-264, Asn-271, and Lys-281.

Belongs to the FPP/GGPP synthase family. It depends on Mg(2+) as a cofactor.

Its pathway is secondary metabolite biosynthesis. In terms of biological role, prenyltransferase; part of the gene cluster that mediates the biosynthesis of paspalitrems, indole-diterpene (IDT) mycotoxins that are potent tremorgens in mammals. The geranylgeranyl diphosphate (GGPP) synthase idtG is proposed to catalyze the first step in IDT biosynthesis via catalysis of a series of iterative condensations of isopentenyl diphosphate (IPP) with dimethylallyl diphosphate (DMAPP), geranyl diphosphate (GPP), and farnesyl diphosphate (FPP), to form GGPP. Condensation of indole-3-glycerol phosphate with GGPP by the prenyltransferase idtC then forms 3-geranylgeranylindole (3-GGI). Epoxidation of the two terminal alkenes of the geranylgeranyl moiety by the FAD-dependent monooxygenase idtM, and cyclization by the terpene cyclase idtB then leads to the production of paspaline. The cytochrome P450 monooxygenase idtP then catalyzes oxidative elimination of the pendant methyl group at C-12 of paspaline and generates the C-10 ketone to yield 13-desoxypaxilline. The cytochrome P450 monooxygenase idtQ may catalyze the C-13 oxidation of 13-desoxypaxilline to afford paxilline. Considering that both paspalicine and paxilline were detected in C.paspali, idtQ also catalyzes the formation of paspalinine from 13-desoxypaxilline via paspalicine as an intermediate. Finally, the alpha-prenyltransferase idtF prenylates paspalinine at the C-20 or the C-21 positions to yield paspalitrems A and C, respectively. The hydroxylation of paspalitrem A at C-32 by a still unknown oxidase affords paspalitrem B. This Claviceps paspali (Rye ergot fungus) protein is Prenyltransferase idtC.